Reading from the N-terminus, the 792-residue chain is Molybdenum cofactor sulfurase (792 aa).

Lys246 bears the N6-(pyridoxal phosphate)lysine mark. Cys414 is an active-site residue. The region spanning 646–792 (LRLLRQSSQR…LTCGDVVVVT (147 aa)) is the MOSC domain. Ser748 bears the Phosphoserine mark.

Belongs to the class-V pyridoxal-phosphate-dependent aminotransferase family. MOCOS subfamily. Requires pyridoxal 5'-phosphate as cofactor.

It catalyses the reaction Mo-molybdopterin + L-cysteine + AH2 = thio-Mo-molybdopterin + L-alanine + A + H2O. Its pathway is cofactor biosynthesis; molybdopterin biosynthesis. In terms of biological role, sulfurates the molybdenum cofactor. Sulfation of molybdenum is essential for xanthine dehydrogenase (XDH) and aldehyde oxidase (ADO) enzymes in which molybdenum cofactor is liganded by 1 oxygen and 1 sulfur atom in active form. This is Molybdenum cofactor sulfurase from Drosophila pseudoobscura pseudoobscura (Fruit fly).